Consider the following 613-residue polypeptide: Dihydroxy-acid dehydratase (613 aa).

Asp81 serves as a coordination point for Mg(2+). Cys122 is a [2Fe-2S] cluster binding site. Mg(2+)-binding residues include Asp123 and Lys124. Residue Lys124 is modified to N6-carboxylysine. Cys193 serves as a coordination point for [2Fe-2S] cluster. Mg(2+) is bound at residue Glu489. Ser515 functions as the Proton acceptor in the catalytic mechanism.

Belongs to the IlvD/Edd family. As to quaternary structure, homodimer. Requires [2Fe-2S] cluster as cofactor. It depends on Mg(2+) as a cofactor.

The enzyme catalyses (2R)-2,3-dihydroxy-3-methylbutanoate = 3-methyl-2-oxobutanoate + H2O. The catalysed reaction is (2R,3R)-2,3-dihydroxy-3-methylpentanoate = (S)-3-methyl-2-oxopentanoate + H2O. It functions in the pathway amino-acid biosynthesis; L-isoleucine biosynthesis; L-isoleucine from 2-oxobutanoate: step 3/4. Its pathway is amino-acid biosynthesis; L-valine biosynthesis; L-valine from pyruvate: step 3/4. Its function is as follows. Functions in the biosynthesis of branched-chain amino acids. Catalyzes the dehydration of (2R,3R)-2,3-dihydroxy-3-methylpentanoate (2,3-dihydroxy-3-methylvalerate) into 2-oxo-3-methylpentanoate (2-oxo-3-methylvalerate) and of (2R)-2,3-dihydroxy-3-methylbutanoate (2,3-dihydroxyisovalerate) into 2-oxo-3-methylbutanoate (2-oxoisovalerate), the penultimate precursor to L-isoleucine and L-valine, respectively. The chain is Dihydroxy-acid dehydratase from Pseudomonas putida (strain W619).